Consider the following 80-residue polypeptide: Styelin-C (80 aa).

The first 22 residues, 1 to 22 (MQMKATILIVLVALFMIQQSEA), serve as a signal peptide directing secretion. The residue at position 24 (tryptophan 24) is a 6'-bromotryptophan. A Leucine amide modification is found at leucine 53. A propeptide spans 55 to 80 (DMTDEEFQEFMQDIEQAREEELLSRQ) (removed in mature form).

The protein resides in the secreted. In terms of biological role, bactericidal against several Gram-positive and Gram-negative bacteria. The chain is Styelin-C from Styela clava (Sea squirt).